The chain runs to 124 residues: Small polypeptide ROTUNDIFOLIA LIKE 3 (124 aa).

The segment at 1–23 is disordered; it reads MEDERWKLSSSKGRSKSGRSCSS. N-linked (GlcNAc...) asparagine glycans are attached at residues asparagine 35 and asparagine 38. The chain crosses the membrane as a helical span at residues 59–75; sequence AWSAAGAGGGGASSSSS. Residues 60 to 95 are disordered; that stretch reads WSAAGAGGGGASSSSSSQHQHQQQQQQSNNSQRLSK. The segment covering 71 to 91 has biased composition (low complexity); that stretch reads SSSSSSQHQHQQQQQQSNNSQ. A glycan (N-linked (GlcNAc...) asparagine) is linked at asparagine 88. The required for DVL/RTFL small polypeptide activity stretch occupies residues 92 to 124; sequence RLSKKCVEAVKEHRARFYIVRRCVSMLVCWRDY.

It belongs to the DVL/RTFL small polypeptides family.

Its subcellular location is the cell membrane. Small polypeptide acting as a regulatory molecule which coordinates cellular responses required for differentiation, growth and development, probably by restricting polar cell proliferation in lateral organs (e.g. leaves and petioles). The protein is Small polypeptide ROTUNDIFOLIA LIKE 3 of Oryza sativa subsp. japonica (Rice).